A 362-amino-acid polypeptide reads, in one-letter code: UDP-N-acetylglucosamine--N-acetylmuramyl-(pentapeptide) pyrophosphoryl-undecaprenol N-acetylglucosamine transferase (362 aa).

UDP-N-acetyl-alpha-D-glucosamine is bound by residues 21–23, asparagine 129, arginine 170, serine 198, and glutamine 290; that span reads TGG.

The protein belongs to the glycosyltransferase 28 family. MurG subfamily.

The protein localises to the cell inner membrane. The catalysed reaction is di-trans,octa-cis-undecaprenyl diphospho-N-acetyl-alpha-D-muramoyl-L-alanyl-D-glutamyl-meso-2,6-diaminopimeloyl-D-alanyl-D-alanine + UDP-N-acetyl-alpha-D-glucosamine = di-trans,octa-cis-undecaprenyl diphospho-[N-acetyl-alpha-D-glucosaminyl-(1-&gt;4)]-N-acetyl-alpha-D-muramoyl-L-alanyl-D-glutamyl-meso-2,6-diaminopimeloyl-D-alanyl-D-alanine + UDP + H(+). The protein operates within cell wall biogenesis; peptidoglycan biosynthesis. Its function is as follows. Cell wall formation. Catalyzes the transfer of a GlcNAc subunit on undecaprenyl-pyrophosphoryl-MurNAc-pentapeptide (lipid intermediate I) to form undecaprenyl-pyrophosphoryl-MurNAc-(pentapeptide)GlcNAc (lipid intermediate II). The sequence is that of UDP-N-acetylglucosamine--N-acetylmuramyl-(pentapeptide) pyrophosphoryl-undecaprenol N-acetylglucosamine transferase from Synechococcus sp. (strain JA-3-3Ab) (Cyanobacteria bacterium Yellowstone A-Prime).